The chain runs to 182 residues: ATP-dependent protease subunit HslV (182 aa).

Residue Thr10 is part of the active site. The Na(+) site is built by Ala166, Cys169, and Ser172.

It belongs to the peptidase T1B family. HslV subfamily. As to quaternary structure, a double ring-shaped homohexamer of HslV is capped on each side by a ring-shaped HslU homohexamer. The assembly of the HslU/HslV complex is dependent on binding of ATP.

It localises to the cytoplasm. It catalyses the reaction ATP-dependent cleavage of peptide bonds with broad specificity.. Its activity is regulated as follows. Allosterically activated by HslU binding. In terms of biological role, protease subunit of a proteasome-like degradation complex believed to be a general protein degrading machinery. The sequence is that of ATP-dependent protease subunit HslV from Rickettsia felis (strain ATCC VR-1525 / URRWXCal2) (Rickettsia azadi).